A 433-amino-acid polypeptide reads, in one-letter code: E3 ubiquitin-protein ligase RNF26 (433 aa).

A run of 5 helical transmembrane segments spans residues 24–44 (LNFL…AFVY), 60–80 (GVLL…CGGL), 147–169 (VINS…VLAL), 183–203 (VVAA…ILLW), and 220–240 (LASF…VLAV). The RING-type zinc-finger motif lies at 380-422 (CVICQDQSKTVLLLPCRHLCLCQACTEILMRHPVYHRNCPLCR).

In terms of assembly, interacts with INCA1. Interacts with TMEM43, ENDOD1, TMEM33 and TMED1 to form a complex capable of modulating innate immune signaling through the cGAS-STING pathway. Interacts with UBE2J1; this interaction is important for SQSTM1 ubiquitination. As to expression, ubiquitous. Up-regulated in several cancer cell lines.

It localises to the endoplasmic reticulum membrane. It carries out the reaction S-ubiquitinyl-[E2 ubiquitin-conjugating enzyme]-L-cysteine + [acceptor protein]-L-lysine = [E2 ubiquitin-conjugating enzyme]-L-cysteine + N(6)-ubiquitinyl-[acceptor protein]-L-lysine.. The protein operates within protein modification; protein ubiquitination. In terms of biological role, E3 ubiquitin-protein ligase that plays a key role in endosome organization by retaining vesicles in the perinuclear cloud. Acts as a platform for perinuclear positioning of the endosomal system by mediating ubiquitination of SQSTM1 through interaction with the ubiquitin conjugating enzyme UBE2J1. Ubiquitinated SQSTM1 attracts specific vesicle-associated adapters, forming a molecular bridge that restrains cognate vesicles in the perinuclear region and organizes the endosomal pathway for efficient cargo transport. Also acts as a regulator of type I interferon production in response to viral infection by mediating the formation of 'Lys-11'-linked polyubiquitin chains on TMEM173/STING, leading to stabilize TMEM173/STING. Also required to limit type I interferon response by promoting autophagic degradation of IRF3. This is E3 ubiquitin-protein ligase RNF26 from Homo sapiens (Human).